Here is a 659-residue protein sequence, read N- to C-terminus: QWRF motif-containing protein 2 (659 aa).

Disordered regions lie at residues 1–125 (MVAA…SVTV), 157–221 (SKKK…LDCG), 291–317 (DTDS…ISKS), 340–359 (RLQD…TSSI), and 371–429 (SDAV…NAYN). The segment covering 42 to 72 (SPSPSHSVSSTTTTTTTTTTTTSSSSSSSSS) has biased composition (low complexity). Residues 90-102 (RSTTNSASNSIKT) show a composition bias toward polar residues. Over residues 172–190 (STPERRRSTPVRDQRENSK) the composition is skewed to basic and acidic residues. Composition is skewed to polar residues over residues 206–216 (SESVVPNSLSR) and 291–303 (DTDS…TNGV). 2 stretches are compositionally biased toward low complexity: residues 345–359 (GSPL…TSSI) and 401–418 (ATTT…SRAR). The QWRF motif motif lies at 468 to 471 (QWRF).

This sequence belongs to the QWRF family.

This chain is QWRF motif-containing protein 2 (QWRF2), found in Arabidopsis thaliana (Mouse-ear cress).